A 201-amino-acid polypeptide reads, in one-letter code: Ras-related protein Rab-9A (201 aa).

Residue A2 is modified to N-acetylalanine. Residue G17 coordinates GDP. Residues G17, V18, G19, K20, S21, S22, T34, H38, and T39 each coordinate GTP. 4 residues coordinate GDP: G19, K20, S21, and S22. Mg(2+) is bound at residue S21. The Switch 1 motif lies at 31-42; it reads KFDTQLFHTIGV. Mg(2+) contacts are provided by T39 and D62. A Switch 2 motif is present at residues 64–78; sequence AGQERFRSLRTPFYR. Residues G65, N124, K125, and D127 each coordinate GTP. Residues N124, K125, D127, A155, and K156 each contribute to the GDP site. Position 156 (K156) interacts with GTP. S179 is subject to Phosphoserine. Position 187 is a phosphothreonine (T187). 2 S-geranylgeranyl cysteine lipidation sites follow: C200 and C201.

The protein belongs to the small GTPase superfamily. Rab family. Interacts (preferentially in its GTP-bound form) with GCC2 (via its GRIP domain). Interacts (GTP-bound form) with SGSM1; the GDP-bound form has much lower affinity for SGSM1. Interacts with SGSM2. The GTP-bound form but not the GDP-bound form interacts with HPS4 and the BLOC-3 complex (heterodimer of HPS1 and HPS4) but does not interact with HPS1 alone. Interacts (GTP-bound form) with NDE1; two RAB9A-GTP molecules lie on the opposite sides of the NDE1 homodimer; the interaction leads to RAB9A-dynein motor tethering. Interacts (GTP-bound form) with NDEL1. Mg(2+) serves as cofactor.

The protein localises to the cell membrane. The protein resides in the endoplasmic reticulum membrane. It is found in the golgi apparatus membrane. It localises to the late endosome. Its subcellular location is the cytoplasmic vesicle. The protein localises to the phagosome membrane. The protein resides in the phagosome. It is found in the cytoplasmic vesicle membrane. It localises to the melanosome. It catalyses the reaction GTP + H2O = GDP + phosphate + H(+). With respect to regulation, regulated by guanine nucleotide exchange factors (GEFs) which promote the exchange of bound GDP for free GTP. Regulated by GTPase activating proteins (GAPs) which increase the GTP hydrolysis activity. Inhibited by GDP dissociation inhibitors (GDIs). Functionally, the small GTPases Rab are key regulators of intracellular membrane trafficking, from the formation of transport vesicles to their fusion with membranes. Rabs cycle between an inactive GDP-bound form and an active GTP-bound form that is able to recruit to membranes different sets of downstream effectors directly responsible for vesicle formation, movement, tethering and fusion. RAB9A is involved in the transport of proteins between the endosomes and the trans-Golgi network (TGN). Specifically uses NDE1/NDEL1 as an effector to interact with the dynein motor complex in order to control retrograde trafficking of RAB9-associated late endosomes to the TGN. Involved in the recruitment of SGSM2 to melanosomes and is required for the proper trafficking of melanogenic enzymes TYR, TYRP1 and DCT/TYRP2 to melanosomes in melanocytes. This is Ras-related protein Rab-9A (RAB9A) from Canis lupus familiaris (Dog).